The primary structure comprises 60 residues: MPGEELVRRFLERRVLTEKNIERFVKYYWLVSTARMVLGVTILILILIGGLKFSQLIPWR.

A helical transmembrane segment spans residues 27–49 (YYWLVSTARMVLGVTILILILIG).

Its subcellular location is the membrane. This is an uncharacterized protein from Archaeoglobus fulgidus (strain ATCC 49558 / DSM 4304 / JCM 9628 / NBRC 100126 / VC-16).